We begin with the raw amino-acid sequence, 347 residues long: NADH-ubiquinone oxidoreductase chain 2 (347 aa).

A run of 11 helical transmembrane segments spans residues 3–23 (PPILIIIMSTVMSGTMIVLTS), 25–45 (HWLLIWIGFEMNMLAIIPILM), 60–80 (FLTQATASMLLMMGIIINLMF), 96–116 (GLVTIALTMKLGMAPFHFWVP), 122–142 (ISLSSGMILLTWQKIAPLSIL), 153–173 (LLITMAIASVLIGGWGGLNQT), 178–198 (ILAYSSIAHMGWMAVILTYNP), 200–220 (LMILNLTIYITMTLSTFMLFM), 237–257 (LPLMTSLILVLMMSLGGLPPL), 274–294 (DMIILPTFMAITALLNLYFYM), and 323–343 (IILLPPLIIISTMLLPMTPMM).

It belongs to the complex I subunit 2 family. Core subunit of respiratory chain NADH dehydrogenase (Complex I) which is composed of 45 different subunits. Interacts with TMEM242.

It is found in the mitochondrion inner membrane. The enzyme catalyses a ubiquinone + NADH + 5 H(+)(in) = a ubiquinol + NAD(+) + 4 H(+)(out). Core subunit of the mitochondrial membrane respiratory chain NADH dehydrogenase (Complex I) which catalyzes electron transfer from NADH through the respiratory chain, using ubiquinone as an electron acceptor. Essential for the catalytic activity and assembly of complex I. This is NADH-ubiquinone oxidoreductase chain 2 from Halichoerus grypus (Gray seal).